Reading from the N-terminus, the 201-residue chain is Chromophore lyase CpcT/CpeT (201 aa).

Belongs to the CpcT/CpeT biliprotein lyase family.

The protein localises to the plastid. It localises to the organellar chromatophore. Its function is as follows. Covalently attaches a chromophore to Cys residue(s) of phycobiliproteins. The sequence is that of Chromophore lyase CpcT/CpeT from Paulinella chromatophora.